A 514-amino-acid polypeptide reads, in one-letter code: LWamide neuropeptides (514 aa).

A signal peptide spans M1 to S22. The span at V23–K53 shows a compositional bias: basic and acidic residues. The propeptide occupies V23–P75. A disordered region spans residues V23–A180. W81 and W90 each carry tryptophan amide. Positions S93–G97 are excised as a propeptide. A tryptophan amide mark is found at W102 and W111. Positions S114 to G118 are excised as a propeptide. Tryptophan amide is present on residues W123 and W132. Positions S135 to G139 are excised as a propeptide. Tryptophan amide is present on residues W144 and W153. The propeptide occupies S156–G160. Residues W165 and W174 each carry the tryptophan amide modification. A propeptide spanning residues S177–R181 is cleaved from the precursor. Residue W186 is modified to Tryptophan amide. The propeptide occupies E190–R199. W205 carries the tryptophan amide modification. Residues S208–G212 constitute a propeptide that is removed on maturation. W217 is subject to Tryptophan amide. Positions E221 to R230 are excised as a propeptide. W236 is modified (tryptophan amide). A propeptide spanning residues S239–G243 is cleaved from the precursor. Tryptophan amide occurs at positions 248 and 257. Positions G258–G475 are disordered. The propeptide occupies S260–L264. Tryptophan amide occurs at positions 269 and 278. The propeptide occupies S281–P284. A tryptophan amide mark is found at W290 and W299. Residues S302–P305 constitute a propeptide that is removed on maturation. A tryptophan amide mark is found at W311 and W320. Residues S323 to P326 constitute a propeptide that is removed on maturation. Tryptophan amide is present on residues W332 and W341. Positions S344 to P347 are excised as a propeptide. Residue W353 is modified to Tryptophan amide. The propeptide occupies S356 to P366. Tryptophan amide is present on W372. The propeptide occupies Q376–P387. Tryptophan amide occurs at positions 393 and 402. Positions S405 to P408 are excised as a propeptide. W414 and W423 each carry tryptophan amide. Residues S426–P429 constitute a propeptide that is removed on maturation. W435 and W444 each carry tryptophan amide. A propeptide spanning residues S447–P450 is cleaved from the precursor. Residues W456 and W465 each carry the tryptophan amide modification. Residues S468 to G472 constitute a propeptide that is removed on maturation. A tryptophan amide mark is found at W477 and W487. The disordered stretch occupies residues R489–Q514. Positions S490 to Q514 are excised as a propeptide.

The protein belongs to the LWamide neuropeptide family.

Its subcellular location is the secreted. Metamorphosin A may be part of an internal signaling system involved in control of metamorphosis. This Anthopleura elegantissima (Green aggregating anemone) protein is LWamide neuropeptides.